Here is a 157-residue protein sequence, read N- to C-terminus: DNA gyrase inhibitor (157 aa).

It belongs to the DNA gyrase inhibitor family. As to quaternary structure, interacts with DNA gyrase.

It is found in the cytoplasm. Its function is as follows. Inhibits the supercoiling activity of DNA gyrase. Acts by inhibiting DNA gyrase at an early step, prior to (or at the step of) binding of DNA by the gyrase. It protects cells against toxins that target DNA gyrase, by inhibiting activity of these toxins and reducing the formation of lethal double-strand breaks in the cell. The protein is DNA gyrase inhibitor of Enterobacter lignolyticus (strain SCF1).